The sequence spans 532 residues: Probable rhamnogalacturonase B (532 aa).

The first 21 residues, 1-21 (MRINTLSLFSLVSLVPTLALA), serve as a signal peptide directing secretion. The cysteines at positions 42 and 68 are disulfide-linked. Asp219 (proton donor) is an active-site residue. Cys221 and Cys238 are oxidised to a cystine. Asn239 carries N-linked (GlcNAc...) asparagine glycosylation. The active site involves His294. Asn321 carries N-linked (GlcNAc...) asparagine glycosylation. Cystine bridges form between Cys344–Cys350 and Cys374–Cys383. 2 stretches are compositionally biased toward low complexity: residues 466–475 (TVAAATSTPA) and 490–499 (QPSQQSPGQS). The segment at 466-532 (TVAAATSTPA…HRHHQRHGHH (67 aa)) is disordered. Over residues 521–532 (AGHRHHQRHGHH) the composition is skewed to basic residues.

Belongs to the glycosyl hydrolase 28 family.

The protein resides in the secreted. It catalyses the reaction Endohydrolysis of alpha-D-GalA-(1-&gt;2)-alpha-L-Rha glycosidic bond in the rhamnogalacturonan I backbone with initial inversion of anomeric configuration releasing oligosaccharides with beta-D-GalA at the reducing end.. Its function is as follows. Pectinolytic enzymes consist of four classes of enzymes: pectine lyase, polygalacturonase, pectin methylesterase and rhamnogalacturonase. Hydrolyzes alpha-D-galacturonopyranosyl-(1,2)-alpha-L-rhamnopyranosyl linkages in the backbone of the hairy regions of pectins. This is Probable rhamnogalacturonase B (rhgB) from Aspergillus oryzae (strain ATCC 42149 / RIB 40) (Yellow koji mold).